A 181-amino-acid polypeptide reads, in one-letter code: ATP synthase subunit delta (181 aa).

This sequence belongs to the ATPase delta chain family. As to quaternary structure, F-type ATPases have 2 components, F(1) - the catalytic core - and F(0) - the membrane proton channel. F(1) has five subunits: alpha(3), beta(3), gamma(1), delta(1), epsilon(1). F(0) has three main subunits: a(1), b(2) and c(10-14). The alpha and beta chains form an alternating ring which encloses part of the gamma chain. F(1) is attached to F(0) by a central stalk formed by the gamma and epsilon chains, while a peripheral stalk is formed by the delta and b chains.

The protein localises to the cell membrane. Functionally, f(1)F(0) ATP synthase produces ATP from ADP in the presence of a proton or sodium gradient. F-type ATPases consist of two structural domains, F(1) containing the extramembraneous catalytic core and F(0) containing the membrane proton channel, linked together by a central stalk and a peripheral stalk. During catalysis, ATP synthesis in the catalytic domain of F(1) is coupled via a rotary mechanism of the central stalk subunits to proton translocation. This protein is part of the stalk that links CF(0) to CF(1). It either transmits conformational changes from CF(0) to CF(1) or is implicated in proton conduction. The polypeptide is ATP synthase subunit delta (Mycoplasma capricolum subsp. capricolum (strain California kid / ATCC 27343 / NCTC 10154)).